The chain runs to 397 residues: Tryptophan synthase beta chain (397 aa).

K87 is subject to N6-(pyridoxal phosphate)lysine.

Belongs to the TrpB family. Tetramer of two alpha and two beta chains. The cofactor is pyridoxal 5'-phosphate.

The enzyme catalyses (1S,2R)-1-C-(indol-3-yl)glycerol 3-phosphate + L-serine = D-glyceraldehyde 3-phosphate + L-tryptophan + H2O. It functions in the pathway amino-acid biosynthesis; L-tryptophan biosynthesis; L-tryptophan from chorismate: step 5/5. Functionally, the beta subunit is responsible for the synthesis of L-tryptophan from indole and L-serine. This is Tryptophan synthase beta chain from Shigella boydii serotype 18 (strain CDC 3083-94 / BS512).